The chain runs to 327 residues: Malate dehydrogenase (327 aa).

Residue Gly12–Gly18 coordinates NAD(+). Residues Arg93 and Arg99 each contribute to the substrate site. Residues Asn106, Gln113, and Val130–Asn132 each bind NAD(+). Positions 132 and 163 each coordinate substrate. Catalysis depends on His188, which acts as the Proton acceptor.

This sequence belongs to the LDH/MDH superfamily. MDH type 2 family.

The enzyme catalyses (S)-malate + NAD(+) = oxaloacetate + NADH + H(+). In terms of biological role, catalyzes the reversible oxidation of malate to oxaloacetate. In Cupriavidus necator (strain ATCC 17699 / DSM 428 / KCTC 22496 / NCIMB 10442 / H16 / Stanier 337) (Ralstonia eutropha), this protein is Malate dehydrogenase.